Here is a 300-residue protein sequence, read N- to C-terminus: Recombination-associated protein RdgC (300 aa).

It belongs to the RdgC family.

The protein localises to the cytoplasm. It is found in the nucleoid. Its function is as follows. May be involved in recombination. The protein is Recombination-associated protein RdgC of Janthinobacterium sp. (strain Marseille) (Minibacterium massiliensis).